The chain runs to 366 residues: GTPase Obg (366 aa).

Positions 1–162 (MRFVDEATIN…RRLRLELKIL (162 aa)) constitute an Obg domain. One can recognise an OBG-type G domain in the interval 163–335 (ADAGLLGLPN…VVDAMWRLRD (173 aa)). GTP is bound by residues 169–176 (GLPNAGKS), 194–198 (FTTLT), 218–221 (DIPG), 288–291 (NKID), and 316–318 (SAM). The Mg(2+) site is built by S176 and T196.

The protein belongs to the TRAFAC class OBG-HflX-like GTPase superfamily. OBG GTPase family. As to quaternary structure, monomer. It depends on Mg(2+) as a cofactor.

The protein resides in the cytoplasm. In terms of biological role, an essential GTPase which binds GTP, GDP and possibly (p)ppGpp with moderate affinity, with high nucleotide exchange rates and a fairly low GTP hydrolysis rate. Plays a role in control of the cell cycle, stress response, ribosome biogenesis and in those bacteria that undergo differentiation, in morphogenesis control. This is GTPase Obg from Nitratidesulfovibrio vulgaris (strain ATCC 29579 / DSM 644 / CCUG 34227 / NCIMB 8303 / VKM B-1760 / Hildenborough) (Desulfovibrio vulgaris).